The primary structure comprises 251 residues: MGVAFDKCETRPANIDAILSGLDRYNPETTTIFQDYVVQQCEDRTFDCYANLALLKLYQFNPHLLQAETVTNILAKALTVFPSPAFSLCLSLLPAHTQPFPSNTEAQAASQTSDFVESVQKLARLSTLLESAQYAQFWSTLNSDDLYADLTADVAGFEELVRIRIAVEVGKAFREINAEVLEQWLDLRSREALEKFVAEVCSWEVDKSGPNGTVVKVPTNKENEVRSEVKSERVGVEMFGRVIRRGFEQAA.

The 179-residue stretch at Phe46–Glu224 folds into the PCI domain.

The protein belongs to the eIF-3 subunit K family. As to quaternary structure, component of the eukaryotic translation initiation factor 3 (eIF-3) complex.

Its subcellular location is the cytoplasm. Component of the eukaryotic translation initiation factor 3 (eIF-3) complex, which is involved in protein synthesis of a specialized repertoire of mRNAs and, together with other initiation factors, stimulates binding of mRNA and methionyl-tRNAi to the 40S ribosome. The eIF-3 complex specifically targets and initiates translation of a subset of mRNAs involved in cell proliferation. This Aspergillus oryzae (strain ATCC 42149 / RIB 40) (Yellow koji mold) protein is Eukaryotic translation initiation factor 3 subunit K.